Here is a 95-residue protein sequence, read N- to C-terminus: Small ribosomal subunit protein bS6 (95 aa).

It belongs to the bacterial ribosomal protein bS6 family.

Binds together with bS18 to 16S ribosomal RNA. This Aster yellows witches'-broom phytoplasma (strain AYWB) protein is Small ribosomal subunit protein bS6.